A 386-amino-acid chain; its full sequence is Bifunctional enzyme IspD/IspF (386 aa).

The interval 1–230 is 2-C-methyl-D-erythritol 4-phosphate cytidylyltransferase; the sequence is MNSVPSLPGQ…LEEQSMSVIP (230 aa). The segment at 231–386 is 2-C-methyl-D-erythritol 2,4-cyclodiphosphate synthase; that stretch reads RTGMGFDVHR…AQAVATVVSG (156 aa). Residues D237 and H239 each contribute to the a divalent metal cation site. 4-CDP-2-C-methyl-D-erythritol 2-phosphate is bound by residues 237 to 239 and 263 to 264; these read DVH and HS. H271 lines the a divalent metal cation pocket. 4-CDP-2-C-methyl-D-erythritol 2-phosphate is bound by residues 285 to 287, 361 to 364, and R371; these read DIG and TTTE.

The protein in the N-terminal section; belongs to the IspD/TarI cytidylyltransferase family. IspD subfamily. In the C-terminal section; belongs to the IspF family. A divalent metal cation serves as cofactor.

It carries out the reaction 2-C-methyl-D-erythritol 4-phosphate + CTP + H(+) = 4-CDP-2-C-methyl-D-erythritol + diphosphate. It catalyses the reaction 4-CDP-2-C-methyl-D-erythritol 2-phosphate = 2-C-methyl-D-erythritol 2,4-cyclic diphosphate + CMP. It participates in isoprenoid biosynthesis; isopentenyl diphosphate biosynthesis via DXP pathway; isopentenyl diphosphate from 1-deoxy-D-xylulose 5-phosphate: step 2/6. Its pathway is isoprenoid biosynthesis; isopentenyl diphosphate biosynthesis via DXP pathway; isopentenyl diphosphate from 1-deoxy-D-xylulose 5-phosphate: step 4/6. In terms of biological role, bifunctional enzyme that catalyzes the formation of 4-diphosphocytidyl-2-C-methyl-D-erythritol from CTP and 2-C-methyl-D-erythritol 4-phosphate (MEP) (IspD), and catalyzes the conversion of 4-diphosphocytidyl-2-C-methyl-D-erythritol 2-phosphate (CDP-ME2P) to 2-C-methyl-D-erythritol 2,4-cyclodiphosphate (ME-CPP) with a corresponding release of cytidine 5-monophosphate (CMP) (IspF). This chain is Bifunctional enzyme IspD/IspF, found in Novosphingobium aromaticivorans (strain ATCC 700278 / DSM 12444 / CCUG 56034 / CIP 105152 / NBRC 16084 / F199).